A 433-amino-acid polypeptide reads, in one-letter code: Bifunctional urease accessory protein UreEF (433 aa).

The urease accessory protein UreE stretch occupies residues 1-200 (MKIANTFIKR…VMATAASTAS (200 aa)). The interval 200-433 (SMTPSLDAGQ…ETQFSRLFRS (234 aa)) is urease accessory protein UreF.

This sequence in the N-terminal section; belongs to the UreE family. In the C-terminal section; belongs to the UreF family. In terms of assembly, ureD, UreF and UreG form a complex that acts as a GTP-hydrolysis-dependent molecular chaperone, activating the urease apoprotein by helping to assemble the nickel containing metallocenter of UreC. The UreE protein probably delivers the nickel.

It localises to the cytoplasm. Involved in urease metallocenter assembly. Binds nickel. Probably functions as a nickel donor during metallocenter assembly. Its function is as follows. Required for maturation of urease via the functional incorporation of the urease nickel metallocenter. The polypeptide is Bifunctional urease accessory protein UreEF (ureEF) (Bordetella bronchiseptica (Alcaligenes bronchisepticus)).